The following is a 161-amino-acid chain: Small ribosomal subunit protein uS9 (161 aa).

This sequence belongs to the universal ribosomal protein uS9 family.

This Rickettsia felis (strain ATCC VR-1525 / URRWXCal2) (Rickettsia azadi) protein is Small ribosomal subunit protein uS9.